The chain runs to 286 residues: NADPH-dependent 7-cyano-7-deazaguanine reductase (286 aa).

Position 92–94 (isoleucine 92–serine 94) interacts with substrate. Residue serine 94–lysine 95 coordinates NADPH. The active-site Thioimide intermediate is cysteine 194. Catalysis depends on aspartate 201, which acts as the Proton donor. Histidine 233–glutamate 234 contacts substrate. Arginine 262–glycine 263 lines the NADPH pocket.

This sequence belongs to the GTP cyclohydrolase I family. QueF type 2 subfamily. As to quaternary structure, homodimer.

It localises to the cytoplasm. It catalyses the reaction 7-aminomethyl-7-carbaguanine + 2 NADP(+) = 7-cyano-7-deazaguanine + 2 NADPH + 3 H(+). It functions in the pathway tRNA modification; tRNA-queuosine biosynthesis. Catalyzes the NADPH-dependent reduction of 7-cyano-7-deazaguanine (preQ0) to 7-aminomethyl-7-deazaguanine (preQ1). This Shewanella sp. (strain MR-7) protein is NADPH-dependent 7-cyano-7-deazaguanine reductase.